The following is a 603-amino-acid chain: Granule-bound starch synthase 1, chloroplastic/amyloplastic (603 aa).

The N-terminal 75 residues, Met1–Cys75, are a transit peptide targeting the chloroplast. Lys91 contributes to the ADP-alpha-D-glucose binding site.

The protein belongs to the glycosyltransferase 1 family. Bacterial/plant glycogen synthase subfamily. In terms of tissue distribution, expressed in pods and leaves. No expression in flowers or stipules.

Its subcellular location is the plastid. The protein localises to the chloroplast. It localises to the amyloplast. The catalysed reaction is an NDP-alpha-D-glucose + [(1-&gt;4)-alpha-D-glucosyl](n) = [(1-&gt;4)-alpha-D-glucosyl](n+1) + a ribonucleoside 5'-diphosphate + H(+). Its pathway is glycan biosynthesis; starch biosynthesis. May be responsible for the synthesis of amylose. This Pisum sativum (Garden pea) protein is Granule-bound starch synthase 1, chloroplastic/amyloplastic.